Reading from the N-terminus, the 148-residue chain is Nucleoside diphosphate kinase B (148 aa).

ATP contacts are provided by Lys9, Phe57, Arg85, Thr91, Arg102, and Asn112. His115 (pros-phosphohistidine intermediate) is an active-site residue.

The protein belongs to the NDK family. Mg(2+) serves as cofactor.

The catalysed reaction is a 2'-deoxyribonucleoside 5'-diphosphate + ATP = a 2'-deoxyribonucleoside 5'-triphosphate + ADP. It catalyses the reaction a ribonucleoside 5'-diphosphate + ATP = a ribonucleoside 5'-triphosphate + ADP. Its function is as follows. Major role in the synthesis of nucleoside triphosphates other than ATP. The ATP gamma phosphate is transferred to the NDP beta phosphate via a ping-pong mechanism, using a phosphorylated active-site intermediate. The protein is Nucleoside diphosphate kinase B of Flaveria bidentis (Coastal plain yellowtops).